The chain runs to 385 residues: Polyketide synthase 3 (385 aa).

Cysteine 157 is a catalytic residue.

The protein belongs to the thiolase-like superfamily. Chalcone/stilbene synthases family. Expressed in male and female flowers, and seedlings.

It is found in the cytoplasm. Polyketide synthase responsible for the biosynthesis of secondary metabolites. This chain is Polyketide synthase 3 (PKSF3), found in Cannabis sativa (Hemp).